Consider the following 535-residue polypeptide: Alpha-1,3-mannosyl-glycoprotein 4-beta-N-acetylglucosaminyltransferase A (535 aa).

The Cytoplasmic portion of the chain corresponds to 1 to 6 (MRLRNG). A helical; Signal-anchor for type II membrane protein membrane pass occupies residues 7–27 (TVATALVFVTSFLTLSWYTTW). Residues 28–63 (QNGKEKLIAYQREFLALKERLRVAEHRISQRSSELN) are a coiled coil. Over 28–535 (QNGKEKLIAY…NEIHIKKVTS (508 aa)) the chain is Lumenal. Asparagine 77 and asparagine 458 each carry an N-linked (GlcNAc...) asparagine glycan. Serine 474 is subject to Phosphoserine.

Belongs to the glycosyltransferase 54 family. A divalent metal cation is required as a cofactor. N-glycosylated.

The protein resides in the golgi apparatus membrane. It is found in the secreted. It catalyses the reaction N(4)-{beta-D-GlcNAc-(1-&gt;2)-alpha-D-Man-(1-&gt;3)-[beta-D-GlcNAc-(1-&gt;2)-alpha-D-Man-(1-&gt;6)]-beta-D-Man-(1-&gt;4)-beta-D-GlcNAc-(1-&gt;4)-beta-D-GlcNAc}-L-asparaginyl-[protein] + UDP-N-acetyl-alpha-D-glucosamine = N(4)-{beta-D-GlcNAc-(1-&gt;2)-[beta-D-GlcNAc-(1-&gt;4)]-alpha-D-Man-(1-&gt;3)-[beta-D-GlcNAc-(1-&gt;2)-alpha-D-Man-(1-&gt;6)]-beta-D-Man-(1-&gt;4)-beta-D-GlcNAc-(1-&gt;4)-beta-D-GlcNAc}-L-asparaginyl-[protein] + UDP + H(+). The catalysed reaction is an N(4)-{beta-D-GlcNAc-(1-&gt;2)-alpha-D-Man-(1-&gt;3)-[alpha-D-Man-(1-&gt;6)]-beta-D-Man-(1-&gt;4)-beta-D-GlcNAc-(1-&gt;4)-beta-D-GlcNAc}-L-asparaginyl-[protein] + UDP-N-acetyl-alpha-D-glucosamine = an N(4)-{beta-D-GlcNAc-(1-&gt;2)-[beta-D-GlcNAc-(1-&gt;4)]-alpha-D-Man-(1-&gt;3)-[alpha-D-Man-(1-&gt;6)]-beta-D-Man-(1-&gt;4)-beta-D-GlcNAc-(1-&gt;4)-beta-D-GlcNAc}-L-asparaginyl-[protein] + UDP + H(+). It carries out the reaction an N(4)-{beta-D-GlcNAc-(1-&gt;2)-alpha-D-Man-(1-&gt;3)-[beta-D-GlcNAc-(1-&gt;2)-[beta-D-GlcNAc-(1-&gt;6)]-alpha-D-Man-(1-&gt;6)]-beta-D-Man-(1-&gt;4)-beta-D-GlcNAc-(1-&gt;4)-beta-D-GlcNAc}-L-asparaginyl-[protein] + UDP-N-acetyl-alpha-D-glucosamine = an N(4)-{beta-D-GlcNAc-(1-&gt;2)-[beta-D-GlcNAc-(1-&gt;4)]-alpha-D-Man-(1-&gt;3)-[beta-D-GlcNAc-(1-&gt;2)-[beta-D-GlcNAc-(1-&gt;6)]-alpha-D-Man-(1-&gt;6)]-beta-D-Man-(1-&gt;4)-beta-D-GlcNAc-(1-&gt;4)-beta-D-GlcNAc}-L-asparaginyl-[protein] + UDP + H(+). The enzyme catalyses an N(4)-{beta-D-GlcNAc-(1-&gt;2)-alpha-D-Man-(1-&gt;3)-[beta-D-GlcNAc-(1-&gt;2)-alpha-D-Man-(1-&gt;6)]-beta-D-Man-(1-&gt;4)-beta-D-GlcNAc-(1-&gt;4)-[alpha-L-Fuc-(1-&gt;6)]-beta-D-GlcNAc}-L-asparaginyl-[protein] + UDP-N-acetyl-alpha-D-glucosamine = N(4)-{beta-D-GlcNAc-(1-&gt;2)-[beta-D-GlcNAc-(1-&gt;4)]-alpha-D-Man-(1-&gt;3)-[beta-D-GlcNAc-(1-&gt;2)-alpha-D-Man-(1-&gt;6)]-beta-D-Man-(1-&gt;4)-beta-D-GlcNAc-(1-&gt;4)-[alpha-L-Fuc-(1-&gt;6)]-beta-D-GlcNAc}-asparaginyl-[protein] + UDP + H(+). It catalyses the reaction an N(4)-{beta-D-GlcNAc-(1-&gt;2)-alpha-D-Man-(1-&gt;3)-[beta-D-Gal-(1-&gt;4)-beta-D-GlcNAc-(1-&gt;2)-alpha-D-Man-(1-&gt;6)]-beta-D-Man-(1-&gt;4)-beta-D-GlcNAc-(1-&gt;4)-beta-D-GlcNAc}-L-asparaginyl-[protein] + UDP-N-acetyl-alpha-D-glucosamine = an N(4)-{beta-D-GlcNAc-(1-&gt;2)-[beta-D-GlcNAc-(1-&gt;4)]-alpha-D-Man-(1-&gt;3)-[beta-D-Gal-(1-&gt;4)-beta-D-GlcNAc-(1-&gt;2)-alpha-D-Man-(1-&gt;6)]-beta-D-Man-(1-&gt;4)-beta-D-GlcNAc-(1-&gt;4)-beta-D-GlcNAc}-L-asparaginyl-[protein] + UDP + H(+). The catalysed reaction is N(4)-{beta-D-GlcNAc-(1-&gt;2)-alpha-D-Man-(1-&gt;3)-[alpha-D-Man-(1-&gt;3)-{alpha-D-Man-(1-&gt;6)}-alpha-D-Man-(1-&gt;6)]-beta-D-Man-(1-&gt;4)-beta-D-GlcNAc-(1-&gt;4)-beta-D-GlcNAc}-asparaginyl-[protein] + UDP-N-acetyl-alpha-D-glucosamine = N(4)-{beta-D-GlcNAc-(1-&gt;2)-[beta-D-GlcNAc-(1-&gt;4)]-alpha-D-Man-(1-&gt;3)-[alpha-D-Man-(1-&gt;3)-{alpha-D-Man-(1-&gt;6)}-alpha-D-Man-(1-&gt;6)]-beta-D-Man-(1-&gt;4)-beta-D-GlcNAc-(1-&gt;4)-beta-D-GlcNAc}-asparaginyl-[protein] + UDP + H(+). It carries out the reaction N(4)-{beta-D-GlcNAc-(1-&gt;2)-alpha-D-Man-(1-&gt;3)-beta-D-Man-(1-&gt;4)-beta-D-GlcNAc-(1-&gt;4)-beta-D-GlcNAc}-asparaginyl-[protein] + UDP-N-acetyl-alpha-D-glucosamine = N(4)-{beta-D-GlcNAc-(1-&gt;2)-[beta-D-GlcNAc-(1-&gt;4)]-alpha-D-Man-(1-&gt;3)-beta-D-Man-(1-&gt;4)-beta-D-GlcNAc-(1-&gt;4)-beta-D-GlcNAc}-asparaginyl-[protein] + UDP + H(+). It functions in the pathway protein modification; protein glycosylation. Its activity is regulated as follows. Inhibited by UDP. Its function is as follows. Glycosyltransferase that catalyze the transfer of GlcNAc from UDP-GlcNAc to the GlcNAcbeta1-2Manalpha1-3 arm of the core structure of N-linked glycans through a beta1-4 linkage and participates in the production of tri- and tetra-antennary N-linked sugar chains. Involved in glucose transport by mediating SLC2A2/GLUT2 glycosylation, thereby controlling cell-surface expression of SLC2A2 in pancreatic beta cells. This Mus musculus (Mouse) protein is Alpha-1,3-mannosyl-glycoprotein 4-beta-N-acetylglucosaminyltransferase A.